Reading from the N-terminus, the 500-residue chain is L-arabinose isomerase (500 aa).

Mn(2+) contacts are provided by Glu-306, Glu-333, His-350, and His-450.

This sequence belongs to the arabinose isomerase family. Homohexamer. Mn(2+) serves as cofactor.

The enzyme catalyses beta-L-arabinopyranose = L-ribulose. The protein operates within carbohydrate degradation; L-arabinose degradation via L-ribulose; D-xylulose 5-phosphate from L-arabinose (bacterial route): step 1/3. Its function is as follows. Catalyzes the conversion of L-arabinose to L-ribulose. In Yersinia pestis (strain Pestoides F), this protein is L-arabinose isomerase.